Reading from the N-terminus, the 315-residue chain is MQRRSRGINTGLILLLSQIFHVGINNIPPVTLATLALNIWFFLNPQKPLYSSCLSVEKCYQQKDWQRLLLSPLHHADDWHLYFNMASMLWKGINLERRLGSRWFAYVITAFSVLTGVVYLLLQFAVAEFMDEPDFKRSCAVGFSGVLFALKVLNNHYCPGGFVNILGFPVPNRFACWVELVAIHLFSPGTSFAGHLAGILVGLMYTQGPLKKIMEACAGGFSSSVGYPGRQYYFNSSGSSGYQDYYPHGRPDHYEEAPRNYDTYTAGLSEEEQLERALQASLWDRGNTRNSPPPYGFHLSPEEMRRQRLHRFDSQ.

The Cytoplasmic segment spans residues 1–21 (MQRRSRGINTGLILLLSQIFH). A helical membrane pass occupies residues 22–42 (VGINNIPPVTLATLALNIWFF). The Extracellular portion of the chain corresponds to 43–106 (LNPQKPLYSS…RRLGSRWFAY (64 aa)). The helical transmembrane segment at 107–127 (VITAFSVLTGVVYLLLQFAVA) threads the bilayer. Residues 128–138 (EFMDEPDFKRS) are Cytoplasmic-facing. Residues 139–157 (CAVGFSGVLFALKVLNNHY) traverse the membrane as a helical segment. Ser-144 acts as the Nucleophile in catalysis. Residues 158–180 (CPGGFVNILGFPVPNRFACWVEL) are Extracellular-facing. A helical membrane pass occupies residues 181–201 (VAIHLFSPGTSFAGHLAGILV). The active site involves His-195. The Cytoplasmic segment spans residues 202–315 (GLMYTQGPLK…RQRLHRFDSQ (114 aa)). Residues 269 to 284 (SEEEQLERALQASLWD) form a ubiquitin-binding domain (UBD) region. The segment at 283–315 (WDRGNTRNSPPPYGFHLSPEEMRRQRLHRFDSQ) is disordered. Over residues 300–315 (SPEEMRRQRLHRFDSQ) the composition is skewed to basic and acidic residues. Residues 301–315 (PEEMRRQRLHRFDSQ) are VCP/p97-interacting motif (VIM).

This sequence belongs to the peptidase S54 family. In terms of assembly, interacts (via C-terminal domain) with VCP. Interacts with ubiquitin and ubiquitinated proteins. Interacts with BIK and STEAP3. In terms of tissue distribution, expressed strongly in testis.

It is found in the endoplasmic reticulum membrane. It localises to the mitochondrion membrane. The catalysed reaction is Cleaves type-1 transmembrane domains using a catalytic dyad composed of serine and histidine that are contributed by different transmembrane domains.. Its activity is regulated as follows. Inhibited by aprotinin. Its function is as follows. Intramembrane-cleaving serine protease that cleaves single transmembrane or multi-pass membrane proteins in the hydrophobic plane of the membrane, luminal loops and juxtamembrane regions. Involved in regulated intramembrane proteolysis and the subsequent release of functional polypeptides from their membrane anchors. Functional component of endoplasmic reticulum-associated degradation (ERAD) for misfolded membrane proteins. Required for the degradation process of some specific misfolded endoplasmic reticulum (ER) luminal proteins. Participates in the transfer of misfolded proteins from the ER to the cytosol, where they are destroyed by the proteasome in a ubiquitin-dependent manner. Functions in BIK, MPZ, PKD1, PTCRA, RHO, STEAP3 and TRAC processing. Involved in the regulation of exosomal secretion; inhibits the TSAP6-mediated secretion pathway. Involved in the regulation of apoptosis; modulates BIK-mediated apoptotic activity. Also plays a role in the regulation of spermatogenesis; inhibits apoptotic activity in spermatogonia. The protein is Rhomboid-related protein 4 (RHBDD1) of Homo sapiens (Human).